The chain runs to 100 residues: Large ribosomal subunit protein eL14 (100 aa).

It belongs to the eukaryotic ribosomal protein eL14 family.

This is Large ribosomal subunit protein eL14 from Aeropyrum pernix (strain ATCC 700893 / DSM 11879 / JCM 9820 / NBRC 100138 / K1).